A 500-amino-acid chain; its full sequence is Potassium/proton antiporter CemA (500 aa).

The chain crosses the membrane as a helical span at residues 129–149 (LFLTTIKTIFILFFVPFLVNF). The tract at residues 204 to 354 (HQTHRDSKPL…GSLDSIKNKD (151 aa)) is insert. The next 3 membrane-spanning stretches (helical) occupy residues 378 to 398 (ITNF…LITL), 425 to 445 (ILLI…ELFF), and 461 to 481 (IFLL…YLIF).

This sequence belongs to the CemA family.

It localises to the plastid. The protein localises to the chloroplast inner membrane. It catalyses the reaction K(+)(in) + H(+)(out) = K(+)(out) + H(+)(in). Contributes to K(+)/H(+) antiport activity by supporting proton efflux to control proton extrusion and homeostasis in chloroplasts in a light-dependent manner to modulate photosynthesis. Prevents excessive induction of non-photochemical quenching (NPQ) under continuous-light conditions. Indirectly promotes efficient inorganic carbon uptake into chloroplasts. The protein is Potassium/proton antiporter CemA of Chlamydomonas reinhardtii (Chlamydomonas smithii).